The following is a 127-amino-acid chain: uncharacterized protein (127 aa).

Positions 1–16 are cleaved as a signal peptide; that stretch reads MLKKIIFGITISLTTG. C17 is lipidated: N-palmitoyl cysteine. C17 carries the S-diacylglycerol cysteine lipid modification. Residues 56–101 are a coiled coil; that stretch reads EVREEIQKYRVEIVDINKKKRELYNRLSKEAQSFLAEQQKYKQKLS. Residues 102–127 form a disordered region; sequence IPKLLIENDPKNNTANSKDNNDKDMK.

It is found in the cell membrane. This is an uncharacterized protein from Rickettsia prowazekii (strain Madrid E).